Here is an 814-residue protein sequence, read N- to C-terminus: MSYSPLLGADRRAGEPSSGLASSTSIRDTLSGALNSTKAYLQPFTPASPYLGSNGVNGHNEPSRLLSDVAPQLMTTRMMAAVTNSNTALGLTPDGQRRARLLLTPGFSITSPARSLVRIGGSLIQSGIGRGPMNGITSNELFVLEESDRILATAARDLDLEANADAQLGARSAIEASKSKAAEPSVSLLRGFQATIPSSTEGRQRRRRVRALASGFEDGPEGPTKLGLKAMGDKARGLMVEGVDAEPVSAFQAREQRHARRNQASRILSRAKEGSRSSAIQLEELERQLREIEREQGDVGVRRSLIDSEMAAVDDKIKVLENIKAGLHKKLLGLREEELELNDEHEGVGELLAVQKHLRAMPGGPAAAANAAASGGATTSQGSSRRRKGPLFMPSEHDELPSGVAFMTLADHSAPITSLDFTEPYGTLVSASLDETVRVWDLASGEEVGRLRGHVGTVKCLQVEDEVCITGGSDHSIRIWDLTKVENFEARLTMTASGELRARRRSPDLNRSPPPVADESMDSIKIRDGDTTAGDGDEEEVRDEFDPCVKRLEGHSKSVTSLYFDDNCLVTGASDKTLRQWDLNTGQCVLTMDILWAISNPTSSQAISQSEFGFPESPSRKASSSSILGATRPDLSSRDSFSVLNNLSGAFSYPTPPYADGSWEMYQDFVGGVQFWGYALASGSGDGGVRMWDMRTGQAHRTLLGHTAPVTCLQFDEHHIISGSLDKSIRIWDLRMGSISDTVRYEHPVTALQFDSRKILAATGENGVKLFNRTTLQHGSLTLNGHTSPVERLRYMDRYAVSGGKDCVVKIWAL.

The disordered stretch occupies residues Met-1 to Thr-24. Residues Arg-270 to Arg-303 are a coiled coil. Over residues Pro-365–Ser-383 the composition is skewed to low complexity. Residues Pro-365 to Pro-394 are disordered. WD repeat units follow at residues Asp-411–Arg-450 and Gly-453–Ala-490. The segment at Glu-499 to Arg-542 is disordered. The stretch at Gly-554–Thr-591 is one WD 3 repeat. A disordered region spans residues Ser-608–Thr-631. WD repeat units follow at residues Ala-659 to Thr-702, Gly-705 to Thr-742, Arg-744 to Leu-781, and Gly-785 to Leu-814.

The protein belongs to the WD repeat MDV1/CAF4 family.

The protein resides in the mitochondrion outer membrane. Involved in mitochondrial fission. Acts as an adapter protein required to form mitochondrial fission complexes. Formation of these complexes is required to promote constriction and fission of the mitochondrial compartment at a late step in mitochondrial division. The sequence is that of Mitochondrial division protein 1 (MDV1) from Mycosarcoma maydis (Corn smut fungus).